Reading from the N-terminus, the 336-residue chain is 3-isopropylmalate dehydrogenase (336 aa).

Substrate-binding residues include Arg-87, Arg-97, Arg-121, and Asp-211. Positions 211, 235, and 239 each coordinate Mg(2+). Position 271–283 (271–283) interacts with NAD(+); the sequence is GSAPDIAGQGVAD.

Belongs to the isocitrate and isopropylmalate dehydrogenases family. LeuB type 2 subfamily. In terms of assembly, homodimer. It depends on Mg(2+) as a cofactor. Mn(2+) is required as a cofactor.

The protein resides in the cytoplasm. It carries out the reaction (2R,3S)-3-isopropylmalate + NAD(+) = 4-methyl-2-oxopentanoate + CO2 + NADH. The protein operates within amino-acid biosynthesis; L-leucine biosynthesis; L-leucine from 3-methyl-2-oxobutanoate: step 3/4. Functionally, catalyzes the oxidation of 3-carboxy-2-hydroxy-4-methylpentanoate (3-isopropylmalate) to 3-carboxy-4-methyl-2-oxopentanoate. The product decarboxylates to 4-methyl-2 oxopentanoate. The protein is 3-isopropylmalate dehydrogenase of Mycobacterium avium (strain 104).